The following is a 500-amino-acid chain: Na(+)/H(+) antiporter NhaB (500 aa).

The next 11 membrane-spanning stretches (helical) occupy residues 13–33 (FLGASPLWYKQVVIAFLIINP), 34–54 (IAVVTLGPFVTGWLFIIEFIF), 62–82 (CYPLQPGGLIAIQAVLLGLTS), 97–117 (ILLLMFMVAGIYFMKDMLLFI), 129–149 (IVISLIFSFSAALLSAFLDAL), 242–262 (FLYVAPVSMPVLACGLLTVVI), 306–326 (GIVAIILILSLAFHIAEVGLV), 350–370 (FEEALPFTALLVVFFTIVSVI), 392–412 (PIMFFIANGILSAISDNVFVA), 449–469 (VATPNGQAAFLFLLTSAIAPL), and 477–497 (MVWMALPYTVVLSVVGGLCVT).

The protein belongs to the NhaB Na(+)/H(+) (TC 2.A.34) antiporter family.

The protein resides in the cell inner membrane. It catalyses the reaction 2 Na(+)(in) + 3 H(+)(out) = 2 Na(+)(out) + 3 H(+)(in). Na(+)/H(+) antiporter that extrudes sodium in exchange for external protons. The polypeptide is Na(+)/H(+) antiporter NhaB (Marinomonas sp. (strain MWYL1)).